Consider the following 149-residue polypeptide: NADH-ubiquinone oxidoreductase chain 6 (149 aa).

The next 4 membrane-spanning stretches (helical) occupy residues 23 to 43 (ILML…FYFI), 51 to 71 (MMMI…MISL), 83 to 103 (LSVT…MTKL), and 114 to 134 (VNFV…LTII).

Belongs to the complex I subunit 6 family.

It localises to the mitochondrion membrane. The catalysed reaction is a ubiquinone + NADH + 5 H(+)(in) = a ubiquinol + NAD(+) + 4 H(+)(out). Functionally, core subunit of the mitochondrial membrane respiratory chain NADH dehydrogenase (Complex I) that is believed to belong to the minimal assembly required for catalysis. Complex I functions in the transfer of electrons from NADH to the respiratory chain. The immediate electron acceptor for the enzyme is believed to be ubiquinone. The protein is NADH-ubiquinone oxidoreductase chain 6 (ND6) of Rhipicephalus sanguineus (Brown dog tick).